Here is a 395-residue protein sequence, read N- to C-terminus: S-adenosylmethionine synthase (395 aa).

His15 contacts ATP. Residue Asp17 participates in Mg(2+) binding. Glu43 is a K(+) binding site. L-methionine is bound by residues Glu56 and Gln99. The flexible loop stretch occupies residues 99-109 (QSPEIAQGVDR). ATP-binding positions include 164 to 166 (DAK), 230 to 231 (RF), Asp239, 245 to 246 (RK), Ala262, and Lys266. Residue Asp239 coordinates L-methionine. An L-methionine-binding site is contributed by Lys270.

The protein belongs to the AdoMet synthase family. In terms of assembly, homotetramer; dimer of dimers. Requires Mg(2+) as cofactor. The cofactor is K(+).

It localises to the cytoplasm. It catalyses the reaction L-methionine + ATP + H2O = S-adenosyl-L-methionine + phosphate + diphosphate. The protein operates within amino-acid biosynthesis; S-adenosyl-L-methionine biosynthesis; S-adenosyl-L-methionine from L-methionine: step 1/1. Functionally, catalyzes the formation of S-adenosylmethionine (AdoMet) from methionine and ATP. The overall synthetic reaction is composed of two sequential steps, AdoMet formation and the subsequent tripolyphosphate hydrolysis which occurs prior to release of AdoMet from the enzyme. The sequence is that of S-adenosylmethionine synthase from Colwellia psychrerythraea (strain 34H / ATCC BAA-681) (Vibrio psychroerythus).